The chain runs to 381 residues: tRNA pseudouridine synthase D (381 aa).

D81 functions as the Nucleophile in the catalytic mechanism. Residues 160–335 (GMPNYFGSQR…TLGSRRFFWV (176 aa)) form the TRUD domain.

The protein belongs to the pseudouridine synthase TruD family.

It carries out the reaction uridine(13) in tRNA = pseudouridine(13) in tRNA. Its function is as follows. Responsible for synthesis of pseudouridine from uracil-13 in transfer RNAs. This Helicobacter pylori (strain P12) protein is tRNA pseudouridine synthase D.